The sequence spans 499 residues: Maturase K (499 aa).

This sequence belongs to the intron maturase 2 family. MatK subfamily.

It localises to the plastid. The protein resides in the chloroplast. Usually encoded in the trnK tRNA gene intron. Probably assists in splicing its own and other chloroplast group II introns. The polypeptide is Maturase K (Camellia sasanqua (Christmas camellia)).